A 141-amino-acid chain; its full sequence is MLLPKRTKFRKQFRGRMTGDAKGGDYVAFGDYGLIAMEPAWIKSNQIEACRIVMSRHFRRGGKIYIRIFPDKPVTKKPAETRMGKGKGAVEYWVSVVKPGRVMFEVAGVTEEQAKEAFRLAGHKLPIQTKMVKREVYDEAQ.

Belongs to the universal ribosomal protein uL16 family. As to quaternary structure, part of the 50S ribosomal subunit. Contacts the CTC protein (RL25).

Binds the 5S and 23S rRNAs and is also seen to make contacts with the A and P site tRNAs. Interacts with A site tRNA mimics, and is probably one of the key factors, along with a helix of the 23S rRNA, in positioning tRNA stems in the peptidyl-transferase center. The chain is Large ribosomal subunit protein uL16 (rplP) from Deinococcus radiodurans (strain ATCC 13939 / DSM 20539 / JCM 16871 / CCUG 27074 / LMG 4051 / NBRC 15346 / NCIMB 9279 / VKM B-1422 / R1).